We begin with the raw amino-acid sequence, 1053 residues long: CRISPR-associated endonuclease Cas9 (1053 aa).

A ruvC-I region spans residues methionine 1–valine 41. Aspartate 10 functions as the For RuvC-like nuclease domain in the catalytic mechanism. Position 10 (aspartate 10) interacts with Mg(2+). Residues valine 41–lysine 426 are recognition lobe. Positions glutamate 435–glutamate 481 are ruvC-II. Mg(2+) is bound by residues glutamate 477 and glutamate 481. Residues arginine 480–leucine 646 enclose the HNH Cas9-type domain. The active-site Proton acceptor for HNH nuclease domain is the histidine 557. Positions arginine 650 to valine 775 are ruvC-III. Position 701 (histidine 701) interacts with Mg(2+). Position 789 (tyrosine 789) interacts with RNA. 2 PAM substrate-binding regions span residues tyrosine 882–alanine 889 and asparagine 985–glutamate 993. The tract at residues lysine 910–glycine 1053 is PAM-interacting domain (PI).

The protein belongs to the CRISPR-associated Cas9 family. Subtype II-A subfamily. Monomer. Binds crRNA and tracrRNA. Mg(2+) is required as a cofactor.

In terms of biological role, CRISPR (clustered regularly interspaced short palindromic repeat) is an adaptive immune system that provides protection against mobile genetic elements (viruses, transposable elements and conjugative plasmids). CRISPR clusters contain spacers, sequences complementary to antecedent mobile elements, and target invading nucleic acids. CRISPR clusters are transcribed and processed into CRISPR RNA (crRNA). In type II CRISPR systems correct processing of pre-crRNA requires a trans-encoded small RNA (tracrRNA), endogenous ribonuclease 3 (rnc) and this protein. The tracrRNA serves as a guide for ribonuclease 3-aided processing of pre-crRNA. Subsequently Cas9/crRNA/tracrRNA endonucleolytically cleaves linear or circular dsDNA target complementary to the spacer; Cas9 is inactive in the absence of the 2 guide RNAs (gRNA). Cas9 recognizes the protospacer adjacent motif (PAM) in the CRISPR repeat sequences to help distinguish self versus nonself, as targets within the bacterial CRISPR locus do not have PAMs. PAM recognition is also required for catalytic activity. In Staphylococcus aureus, this protein is CRISPR-associated endonuclease Cas9.